The following is a 932-amino-acid chain: Protocadherin gamma-A12 (932 aa).

A signal peptide spans 1-29 (MIPARLHRDYKGLVLLGILLGTLWETGCT). Cadherin domains follow at residues 30 to 133 (QIRY…APYF), 134 to 242 (RESE…APAF), 243 to 347 (AQPE…APEV), 348 to 452 (VLTS…PPVF), 453 to 562 (PQAS…APEI), and 570 to 683 (DGST…SPAN). Residues 30–692 (QIRYSVPEEL…NSETSDLTLY (663 aa)) lie on the Extracellular side of the membrane. N-linked (GlcNAc...) asparagine glycans are attached at residues N265, N419, and N545. A helical membrane pass occupies residues 693-713 (LVVAVAAVSCVFLAFVILLLA). Topologically, residues 714 to 932 (LRLRRWHKSR…KKKSGKKEKK (219 aa)) are cytoplasmic. Disordered stretches follow at residues 803–841 (GHGL…WPNN) and 902–932 (ATLT…KEKK). Residues 816–841 (WRFSQAQRPGTSGSQNGDDTGTWPNN) show a composition bias toward polar residues. The segment covering 922 to 932 (NKKKSGKKEKK) has biased composition (basic residues).

Its subcellular location is the cell membrane. In terms of biological role, potential calcium-dependent cell-adhesion protein. May be involved in the establishment and maintenance of specific neuronal connections in the brain. The sequence is that of Protocadherin gamma-A12 (PCDHGA12) from Pan troglodytes (Chimpanzee).